The following is a 66-amino-acid chain: MAKNKGVRIVITLECTECRSASASEKRSPGVSRYTTEKNRRNTTERLEIMKFCPQLNKMTLHKEIK.

It belongs to the bacterial ribosomal protein bL33 family.

This is Large ribosomal subunit protein bL33 from Synechococcus sp. (strain CC9311).